The sequence spans 219 residues: MGQKVNPTGLRVGIIRDWEAKWYAEKDFAAYLKEDLQIRKFIEKRLVDASVSTVEIERAANRVNISIHTAKPGMVIGKGGSEVENLRKELNDLTGKRVHINIVEIKKPDLDAKLVGENIARQLEGRVAFRRAMRGTMQRTMRSGAKGIKTQVAGRLNGADMSRVESYAEGTVPLHTLRADIDYAWVEAHTTYGSLGVKTWIYRGEILPEKKQSNGQGGK.

A KH type-2 domain is found at 38–106; sequence IRKFIEKRLV…RVHINIVEIK (69 aa).

It belongs to the universal ribosomal protein uS3 family. As to quaternary structure, part of the 30S ribosomal subunit. Forms a tight complex with proteins S10 and S14.

Functionally, binds the lower part of the 30S subunit head. Binds mRNA in the 70S ribosome, positioning it for translation. This chain is Small ribosomal subunit protein uS3, found in Levilactobacillus brevis (strain ATCC 367 / BCRC 12310 / CIP 105137 / JCM 1170 / LMG 11437 / NCIMB 947 / NCTC 947) (Lactobacillus brevis).